The primary structure comprises 346 residues: uncharacterized protein (346 aa).

The chain crosses the membrane as a helical span at residues 16-36 (ILGIIICIILIVGFFISFDST).

The protein resides in the membrane. This is an uncharacterized protein from Methanocaldococcus jannaschii (strain ATCC 43067 / DSM 2661 / JAL-1 / JCM 10045 / NBRC 100440) (Methanococcus jannaschii).